Consider the following 657-residue polypeptide: Outer dense fiber protein 2 (657 aa).

2 positions are modified to phosphoserine: S73 and S74. T92 carries the phosphothreonine modification. S95 is modified (phosphoserine; by TSSK4). Phosphoserine is present on residues S106 and S109. Residue T110 is modified to Phosphothreonine. Residues S115 and S129 each carry the phosphoserine modification. K138 participates in a covalent cross-link: Glycyl lysine isopeptide (Lys-Gly) (interchain with G-Cter in SUMO2). S139 is modified (phosphoserine). Coiled coils occupy residues Q144–L423 and E461–R635. T231 is modified (phosphothreonine). Phosphoserine occurs at positions 261 and 632.

The protein belongs to the ODF2 family. In terms of assembly, self-associates. Associates with microtubules and forms a fibrillar structure partially linked to the microtubule network. Interacts via its C-terminus with PLK1. Interacts with ODF1. Interacts with MARK4; the interaction is required for localization of ODF2 to centrioles. Interacts with TSSK4. Interacts with AKNA. Interacts with CFAP58. Interacts with BBOF1. Interacts with CCDC38. Interacts with CCDC42. Post-translationally, tyrosine phosphorylated. Phosphorylated on Ser-95 by TSSK4.

It localises to the cytoplasm. It is found in the cytoskeleton. The protein localises to the microtubule organizing center. The protein resides in the centrosome. Its subcellular location is the cell projection. It localises to the cilium. It is found in the centriole. The protein localises to the spindle pole. The protein resides in the flagellum. Functionally, seems to be a major component of sperm tail outer dense fibers (ODF). ODFs are filamentous structures located on the outside of the axoneme in the midpiece and principal piece of the mammalian sperm tail and may help to maintain the passive elastic structures and elastic recoil of the sperm tail. May have a modulating influence on sperm motility. Functions as a general scaffold protein that is specifically localized at the distal/subdistal appendages of mother centrioles. Component of the centrosome matrix required for the localization of PLK1 and NIN to the centrosomes. Required for the formation and/or maintenance of normal CETN1 assembly. The sequence is that of Outer dense fiber protein 2 (ODF2) from Bos taurus (Bovine).